Consider the following 523-residue polypeptide: 2-isopropylmalate synthase (523 aa).

One can recognise a Pyruvate carboxyltransferase domain in the interval 5–267; that stretch reads VIIFDTTLRD…ETGINAKEIH (263 aa). Positions 14, 202, 204, and 238 each coordinate Mn(2+). Positions 392-523 are regulatory domain; that stretch reads KLQQLVVHSD…QQNKRELGGV (132 aa).

It belongs to the alpha-IPM synthase/homocitrate synthase family. LeuA type 1 subfamily. Homodimer. Requires Mn(2+) as cofactor.

It is found in the cytoplasm. The catalysed reaction is 3-methyl-2-oxobutanoate + acetyl-CoA + H2O = (2S)-2-isopropylmalate + CoA + H(+). Its pathway is amino-acid biosynthesis; L-leucine biosynthesis; L-leucine from 3-methyl-2-oxobutanoate: step 1/4. Functionally, catalyzes the condensation of the acetyl group of acetyl-CoA with 3-methyl-2-oxobutanoate (2-ketoisovalerate) to form 3-carboxy-3-hydroxy-4-methylpentanoate (2-isopropylmalate). The polypeptide is 2-isopropylmalate synthase (Shewanella pealeana (strain ATCC 700345 / ANG-SQ1)).